A 474-amino-acid chain; its full sequence is ATP synthase subunit beta 1 (474 aa).

ATP is bound at residue 157 to 164 (GGAGVGKT).

Belongs to the ATPase alpha/beta chains family. F-type ATPases have 2 components, CF(1) - the catalytic core - and CF(0) - the membrane proton channel. CF(1) has five subunits: alpha(3), beta(3), gamma(1), delta(1), epsilon(1). CF(0) has three main subunits: a(1), b(2) and c(9-12). The alpha and beta chains form an alternating ring which encloses part of the gamma chain. CF(1) is attached to CF(0) by a central stalk formed by the gamma and epsilon chains, while a peripheral stalk is formed by the delta and b chains.

It localises to the cell inner membrane. It catalyses the reaction ATP + H2O + 4 H(+)(in) = ADP + phosphate + 5 H(+)(out). Produces ATP from ADP in the presence of a proton gradient across the membrane. The catalytic sites are hosted primarily by the beta subunits. In Albidiferax ferrireducens (strain ATCC BAA-621 / DSM 15236 / T118) (Rhodoferax ferrireducens), this protein is ATP synthase subunit beta 1.